The following is a 262-amino-acid chain: Small ribosomal subunit protein eS4 (262 aa).

Residues 42-105 enclose the S4 RNA-binding domain; sequence LPLVVFLRNR…NEHFRLVYDV (64 aa). The region spanning 178 to 211 is the KOW domain; that stretch reads GRLVMVTGGRNLGRVGVIVHREKHEGGFDLVHIK.

The protein belongs to the eukaryotic ribosomal protein eS4 family. Component of the small ribosomal subunit. Mature ribosomes consist of a small (40S) and a large (60S) subunit. The 40S subunit contains about 32 different proteins and 1 molecule of RNA (18S). The 60S subunit contains 45 different proteins and 3 molecules of RNA (25S, 5.8S and 5S).

It is found in the cytoplasm. Component of the ribosome, a large ribonucleoprotein complex responsible for the synthesis of proteins in the cell. The small ribosomal subunit (SSU) binds messenger RNAs (mRNAs) and translates the encoded message by selecting cognate aminoacyl-transfer RNA (tRNA) molecules. The large subunit (LSU) contains the ribosomal catalytic site termed the peptidyl transferase center (PTC), which catalyzes the formation of peptide bonds, thereby polymerizing the amino acids delivered by tRNAs into a polypeptide chain. The nascent polypeptides leave the ribosome through a tunnel in the LSU and interact with protein factors that function in enzymatic processing, targeting, and the membrane insertion of nascent chains at the exit of the ribosomal tunnel. The protein is Small ribosomal subunit protein eS4 (RPS42) of Candida albicans (strain SC5314 / ATCC MYA-2876) (Yeast).